The sequence spans 317 residues: Olfactory receptor 2F1 (317 aa).

Residues 1–24 (MGTDNQTWVSEFILLGLSSDWDTR) lie on the Extracellular side of the membrane. The N-linked (GlcNAc...) asparagine glycan is linked to Asn-5. Residues 25–48 (VSLFVLFLVMYVVTVLGNCLIVLL) form a helical membrane-spanning segment. At 49-57 (IRLDSRLHT) the chain is on the cytoplasmic side. Residues 58 to 79 (PMYFFLTNLSLVDVSYATSVVP) traverse the membrane as a helical segment. The Extracellular portion of the chain corresponds to 80 to 100 (QLLAHFLAEHKAIPFQSCAAQ). The cysteines at positions 97 and 189 are disulfide-linked. A helical membrane pass occupies residues 101–120 (LFFSLALGGIEFVLLAVMAY). Residues 121–139 (DRYVAVCDALRYSAIMHGG) are Cytoplasmic-facing. A helical membrane pass occupies residues 140–160 (LCARLAITSWVSGFISSPVQT). Over 161–200 (AITFQLPMCRNKFIDHISCELLAVVRLACVDTSSNEVTIM) the chain is Extracellular. A helical transmembrane segment spans residues 201–222 (VSSIVLLMTPFCLVLLSYIQII). The Cytoplasmic portion of the chain corresponds to 223–236 (STILKIQSREGRKK). A helical transmembrane segment spans residues 237 to 261 (AFHTCASHLTVVALCYGVAIFTYIQ). The Extracellular portion of the chain corresponds to 262–272 (PHSSPSVLQEK). The chain crosses the membrane as a helical span at residues 273–292 (LFSVFYAILTPMLNPMIYSL). Residues 293-317 (RNKEVKGAWQKLLWKFSGLTSKLAT) lie on the Cytoplasmic side of the membrane.

The protein belongs to the G-protein coupled receptor 1 family.

Its subcellular location is the cell membrane. In terms of biological role, odorant receptor. In Homo sapiens (Human), this protein is Olfactory receptor 2F1 (OR2F1).